Here is an 87-residue protein sequence, read N- to C-terminus: Large ribosomal subunit protein bL27 (87 aa).

Residues 1 to 21 form a disordered region; sequence MAHKKAGGSSRNGRDSESKRL.

This sequence belongs to the bacterial ribosomal protein bL27 family.

In Aromatoleum aromaticum (strain DSM 19018 / LMG 30748 / EbN1) (Azoarcus sp. (strain EbN1)), this protein is Large ribosomal subunit protein bL27.